The chain runs to 573 residues: NADP-dependent malic enzyme, chloroplastic (573 aa).

Residue tyrosine 123 is the Proton donor of the active site. Residue arginine 176 participates in NAD(+) binding. The active-site Proton acceptor is the lysine 194. A divalent metal cation is bound by residues glutamate 265, aspartate 266, and aspartate 289. Aspartate 289 serves as a coordination point for NAD(+). 318 to 334 (LFLGAGEAGTGIAELIA) contributes to the NADP(+) binding site. Asparagine 430 is an NAD(+) binding site.

This sequence belongs to the malic enzymes family. As to quaternary structure, homotetramer. The cofactor is Mg(2+). Mn(2+) is required as a cofactor.

The protein resides in the plastid. It localises to the chloroplast. The catalysed reaction is (S)-malate + NADP(+) = pyruvate + CO2 + NADPH. It carries out the reaction oxaloacetate + H(+) = pyruvate + CO2. It participates in photosynthesis; C4 acid pathway. Its function is as follows. The chloroplastic ME isoform decarboxylates malate shuttled from neighboring mesophyll cells. The CO(2) released is then refixed by ribulose-bisphosphate carboxylase. This pathway eliminates the photorespiratory loss of CO(2) that occurs in most plants. This is NADP-dependent malic enzyme, chloroplastic from Solanum lycopersicum (Tomato).